The following is a 322-amino-acid chain: Ferredoxin--NADP reductase (322 aa).

6 residues coordinate FAD: glutamate 37, glutamine 45, tyrosine 50, isoleucine 91, phenylalanine 128, and aspartate 290.

The protein belongs to the ferredoxin--NADP reductase type 2 family. Homodimer. The cofactor is FAD.

It carries out the reaction 2 reduced [2Fe-2S]-[ferredoxin] + NADP(+) + H(+) = 2 oxidized [2Fe-2S]-[ferredoxin] + NADPH. This Malacoplasma penetrans (strain HF-2) (Mycoplasma penetrans) protein is Ferredoxin--NADP reductase.